A 206-amino-acid chain; its full sequence is MQLELLNDQGLATAKYEAPETVFGRAYNEDLVHQIVVAFQANARQGTRAQKDREQVKHSTKKPFKQKGTGRARAGMTSSPLWRGGGRIFPNMPDENFTQKINKKMYRAGMASILSQLAREGRLAVVDSMKVDSPKTKPLAAKFKAMNLESVLVIADEVDENLYLASRNLVNVLVVEPRYADPVSLVHYRKVIVTKAAMEKLQEMFA.

Positions 46-77 (GTRAQKDREQVKHSTKKPFKQKGTGRARAGMT) are disordered. The segment covering 58 to 70 (HSTKKPFKQKGTG) has biased composition (basic residues).

Belongs to the universal ribosomal protein uL4 family. In terms of assembly, part of the 50S ribosomal subunit.

In terms of biological role, one of the primary rRNA binding proteins, this protein initially binds near the 5'-end of the 23S rRNA. It is important during the early stages of 50S assembly. It makes multiple contacts with different domains of the 23S rRNA in the assembled 50S subunit and ribosome. Forms part of the polypeptide exit tunnel. The sequence is that of Large ribosomal subunit protein uL4 from Albidiferax ferrireducens (strain ATCC BAA-621 / DSM 15236 / T118) (Rhodoferax ferrireducens).